The primary structure comprises 251 residues: 5'-nucleotidase SurE (251 aa).

Asp-8, Asp-9, Ser-39, and Asn-95 together coordinate a divalent metal cation.

The protein belongs to the SurE nucleotidase family. A divalent metal cation serves as cofactor.

The protein resides in the cytoplasm. It catalyses the reaction a ribonucleoside 5'-phosphate + H2O = a ribonucleoside + phosphate. Its function is as follows. Nucleotidase that shows phosphatase activity on nucleoside 5'-monophosphates. The sequence is that of 5'-nucleotidase SurE from Ralstonia pickettii (strain 12J).